Here is an 85-residue protein sequence, read N- to C-terminus: Cell division topological specificity factor (85 aa).

Belongs to the MinE family.

In terms of biological role, prevents the cell division inhibition by proteins MinC and MinD at internal division sites while permitting inhibition at polar sites. This ensures cell division at the proper site by restricting the formation of a division septum at the midpoint of the long axis of the cell. This is Cell division topological specificity factor from Deinococcus geothermalis (strain DSM 11300 / CIP 105573 / AG-3a).